The sequence spans 403 residues: Phosphoglycerate kinase (403 aa).

Residues 22–24 (DFN), R37, 60–63 (HFGR), R119, and R152 contribute to the substrate site. ATP-binding positions include K202, E324, and 354-357 (GGDT).

Belongs to the phosphoglycerate kinase family. Monomer.

Its subcellular location is the cytoplasm. It catalyses the reaction (2R)-3-phosphoglycerate + ATP = (2R)-3-phospho-glyceroyl phosphate + ADP. Its pathway is carbohydrate degradation; glycolysis; pyruvate from D-glyceraldehyde 3-phosphate: step 2/5. This Maricaulis maris (strain MCS10) (Caulobacter maris) protein is Phosphoglycerate kinase.